We begin with the raw amino-acid sequence, 601 residues long: NADH-quinone oxidoreductase subunit C/D (601 aa).

The interval 1 to 191 (MKLTREFPSN…DPFMLDAVKQ (191 aa)) is NADH dehydrogenase I subunit C. The NADH dehydrogenase I subunit D stretch occupies residues 215–601 (DYMFLNLGPN…IDFVMSDVDR (387 aa)).

This sequence in the N-terminal section; belongs to the complex I 30 kDa subunit family. In the C-terminal section; belongs to the complex I 49 kDa subunit family. NDH-1 is composed of 13 different subunits. Subunits NuoB, CD, E, F, and G constitute the peripheral sector of the complex.

The protein resides in the cell inner membrane. It catalyses the reaction a quinone + NADH + 5 H(+)(in) = a quinol + NAD(+) + 4 H(+)(out). Its function is as follows. NDH-1 shuttles electrons from NADH, via FMN and iron-sulfur (Fe-S) centers, to quinones in the respiratory chain. The immediate electron acceptor for the enzyme in this species is believed to be ubiquinone. Couples the redox reaction to proton translocation (for every two electrons transferred, four hydrogen ions are translocated across the cytoplasmic membrane), and thus conserves the redox energy in a proton gradient. This is NADH-quinone oxidoreductase subunit C/D from Aeromonas hydrophila subsp. hydrophila (strain ATCC 7966 / DSM 30187 / BCRC 13018 / CCUG 14551 / JCM 1027 / KCTC 2358 / NCIMB 9240 / NCTC 8049).